A 1076-amino-acid chain; its full sequence is Serine/threonine-protein phosphatase 6 regulatory ankyrin repeat subunit C (1076 aa).

ANK repeat units lie at residues 7 to 36, 40 to 69, 73 to 102, 106 to 135, 139 to 168, 172 to 201, 205 to 234, 238 to 267, 271 to 301, 305 to 334, 338 to 367, 371 to 400, 422 to 451, 455 to 484, 488 to 545, 549 to 579, 584 to 613, 617 to 646, 651 to 680, 687 to 716, 720 to 749, 753 to 782, 790 to 819, 822 to 852, 857 to 886, 890 to 920, 924 to 953, and 960 to 989; these read TDQP…NINV, ERRT…NVNA, LWLT…DVNA, LWQT…SLNV, SGRS…SLNV, KERQ…DLGC, KGYG…EIDE, FGNT…NVNQ, KGFT…DVNY, EGKS…EIDC, FGNT…DTAR, HDMF…LYSI, LGRT…DLRR, FGRT…GVNE, KGCS…DPSL, QGYT…CLED, IPVS…NLDV, KGRT…SALI, RKWT…RADI, YGQT…TADA, RGRT…FVLC, KGRT…STDP, SGYS…FSYL, NPFT…KIVN, KGRT…EVNA, TGRT…DLTV, NKNT…DLGL, and ALQM…TVLA. The span at 502 to 514 shows a compositional bias: basic and acidic residues; it reads YRRAEPHTPSSHD. The tract at residues 502 to 522 is disordered; that stretch reads YRRAEPHTPSSHDAEEDEPLK. Residues S1028 and S1075 each carry the phosphoserine modification.

Protein phosphatase 6 (PP6) holoenzyme is proposed to be a heterotrimeric complex formed by the catalytic subunit, a SAPS domain-containing subunit (PP6R) and an ankyrin repeat-domain containing regulatory subunit (ARS). Interacts with PPP6R1.

Its function is as follows. Putative regulatory subunit of protein phosphatase 6 (PP6) that may be involved in the recognition of phosphoprotein substrates. In Homo sapiens (Human), this protein is Serine/threonine-protein phosphatase 6 regulatory ankyrin repeat subunit C (ANKRD52).